Consider the following 73-residue polypeptide: MIIPWQELSTETLDNLIESFVLREGTDYGMQEKTLEQKVADVKKQLVSGEAVLVWSELHESVNIMPAAQFRPD.

It belongs to the UPF0270 family.

The polypeptide is UPF0270 protein PMI2817 (Proteus mirabilis (strain HI4320)).